Consider the following 453-residue polypeptide: Acyl-coenzyme A thioesterase 2, mitochondrial (453 aa).

Residues 1 to 42 (MVASSFAVLRASRLCQWGWKSWTQLSGPPPLSTGGRTTFART) constitute a mitochondrion transit peptide. Position 83 is an N6-acetyllysine (Lys83). Residues Ser273, Asp365, and His399 each act as charge relay system in the active site. Lys447 carries the post-translational modification N6-succinyllysine.

The protein belongs to the C/M/P thioester hydrolase family. In terms of assembly, monomer. The N-terminus is blocked. Constitutively expressed in heart and brown fat. Strongly induced in liver, and weakly in kidney, in peroxisome proliferator treated rat.

Its subcellular location is the mitochondrion matrix. It catalyses the reaction hexadecanoyl-CoA + H2O = hexadecanoate + CoA + H(+). The enzyme catalyses tetradecanoyl-CoA + H2O = tetradecanoate + CoA + H(+). The catalysed reaction is octadecanoyl-CoA + H2O = octadecanoate + CoA + H(+). It carries out the reaction eicosanoyl-CoA + H2O = eicosanoate + CoA + H(+). It catalyses the reaction decanoyl-CoA + H2O = decanoate + CoA + H(+). The enzyme catalyses dodecanoyl-CoA + H2O = dodecanoate + CoA + H(+). The catalysed reaction is (9Z)-octadecenoyl-CoA + H2O = (9Z)-octadecenoate + CoA + H(+). It carries out the reaction (9Z)-hexadecenoyl-CoA + H2O = (9Z)-hexadecenoate + CoA + H(+). It catalyses the reaction (9E)-octadecenoyl-CoA + H2O = (9E)-octadecenoate + CoA + H(+). The enzyme catalyses (9Z,12Z)-octadecadienoyl-CoA + H2O = (9Z,12Z)-octadecadienoate + CoA + H(+). It functions in the pathway lipid metabolism; fatty acid metabolism. Its function is as follows. Catalyzes the hydrolysis of acyl-CoAs into free fatty acids and coenzyme A (CoASH), regulating their respective intracellular levels. Displays higher activity toward long chain acyl CoAs (C14-C20). The enzyme is involved in enhancing the hepatic fatty acid oxidation in mitochondria. This is Acyl-coenzyme A thioesterase 2, mitochondrial (Acot2) from Rattus norvegicus (Rat).